The primary structure comprises 400 residues: Elongation factor Tu 1 (400 aa).

Residues 10 to 209 (KPHVNIGTIG…AVDEYIPTPQ (200 aa)) enclose the tr-type G domain. Residues 19–26 (GHVDHGKT) form a G1 region. A GTP-binding site is contributed by 19–26 (GHVDHGKT). T26 provides a ligand contact to Mg(2+). The G2 stretch occupies residues 60–64 (GITIN). Residues 81–84 (DCPG) form a G3 region. GTP-binding positions include 81-85 (DCPGH) and 136-139 (NKAD). Residues 136–139 (NKAD) are G4. The tract at residues 174 to 176 (SAL) is G5.

This sequence belongs to the TRAFAC class translation factor GTPase superfamily. Classic translation factor GTPase family. EF-Tu/EF-1A subfamily. In terms of assembly, monomer.

Its subcellular location is the cytoplasm. It catalyses the reaction GTP + H2O = GDP + phosphate + H(+). Its function is as follows. GTP hydrolase that promotes the GTP-dependent binding of aminoacyl-tRNA to the A-site of ribosomes during protein biosynthesis. In Pelotomaculum thermopropionicum (strain DSM 13744 / JCM 10971 / SI), this protein is Elongation factor Tu 1.